Here is a 367-residue protein sequence, read N- to C-terminus: Peptide chain release factor 2 (367 aa).

Residue glutamine 254 is modified to N5-methylglutamine.

This sequence belongs to the prokaryotic/mitochondrial release factor family. Methylated by PrmC. Methylation increases the termination efficiency of RF2.

The protein localises to the cytoplasm. Peptide chain release factor 2 directs the termination of translation in response to the peptide chain termination codons UGA and UAA. In Janthinobacterium sp. (strain Marseille) (Minibacterium massiliensis), this protein is Peptide chain release factor 2.